Consider the following 352-residue polypeptide: Eukaryotic translation initiation factor 3 subunit H (352 aa).

Residues 1–34 are disordered; the sequence is MASRKEGTGSTATSSSSTGGAVGKGKGKGGSGDS. At serine 3 the chain carries Phosphoserine. The segment covering 8–19 has biased composition (low complexity); sequence TGSTATSSSSTG. The segment covering 20–32 has biased composition (gly residues); it reads GAVGKGKGKGGSG. Positions 39–173 constitute an MPN domain; that stretch reads VQIDGLVVLK…LKAYRLTPKL (135 aa). Phosphoserine is present on serine 183. The tract at residues 265–300 is disordered; it reads RNSSKQQQQKHQYQQRRQQENMQRQSRGEPPLPEED. Positions 270 to 289 are enriched in low complexity; it reads QQQQKHQYQQRRQQENMQRQ. Lysine 303 participates in a covalent cross-link: Glycyl lysine isopeptide (Lys-Gly) (interchain with G-Cter in SUMO2).

It belongs to the eIF-3 subunit H family. As to quaternary structure, component of the eukaryotic translation initiation factor 3 (eIF-3) complex, which is composed of 13 subunits: EIF3A, EIF3B, EIF3C, EIF3D, EIF3E, EIF3F, EIF3G, EIF3H, EIF3I, EIF3J, EIF3K, EIF3L and EIF3M. The eIF-3 complex appears to include 3 stable modules: module A is composed of EIF3A, EIF3B, EIF3G and EIF3I; module B is composed of EIF3F, EIF3H, and EIF3M; and module C is composed of EIF3C, EIF3D, EIF3E, EIF3K and EIF3L. EIF3C of module C binds EIF3B of module A and EIF3H of module B, thereby linking the three modules. EIF3J is a labile subunit that binds to the eIF-3 complex via EIF3B. The eIF-3 complex interacts with RPS6KB1 under conditions of nutrient depletion. Mitogenic stimulation leads to binding and activation of a complex composed of MTOR and RPTOR, leading to phosphorylation and release of RPS6KB1 and binding of EIF4B to eIF-3. Interacts with RNF139; the interaction leads to protein translation inhibitions in a ubiquitination-dependent manner. Interacts with DHX33; the interaction is independent of RNA.

It localises to the cytoplasm. Its function is as follows. Component of the eukaryotic translation initiation factor 3 (eIF-3) complex, which is required for several steps in the initiation of protein synthesis. The eIF-3 complex associates with the 40S ribosome and facilitates the recruitment of eIF-1, eIF-1A, eIF-2:GTP:methionyl-tRNAi and eIF-5 to form the 43S pre-initiation complex (43S PIC). The eIF-3 complex stimulates mRNA recruitment to the 43S PIC and scanning of the mRNA for AUG recognition. The eIF-3 complex is also required for disassembly and recycling of post-termination ribosomal complexes and subsequently prevents premature joining of the 40S and 60S ribosomal subunits prior to initiation. The eIF-3 complex specifically targets and initiates translation of a subset of mRNAs involved in cell proliferation, including cell cycling, differentiation and apoptosis, and uses different modes of RNA stem-loop binding to exert either translational activation or repression. The protein is Eukaryotic translation initiation factor 3 subunit H (Eif3h) of Rattus norvegicus (Rat).